A 131-amino-acid chain; its full sequence is Small ribosomal subunit protein uS8 (131 aa).

It belongs to the universal ribosomal protein uS8 family. As to quaternary structure, part of the 30S ribosomal subunit. Contacts proteins S5 and S12.

Functionally, one of the primary rRNA binding proteins, it binds directly to 16S rRNA central domain where it helps coordinate assembly of the platform of the 30S subunit. In Azoarcus sp. (strain BH72), this protein is Small ribosomal subunit protein uS8.